A 464-amino-acid chain; its full sequence is V-type ATP synthase beta chain (464 aa).

Belongs to the ATPase alpha/beta chains family.

Functionally, produces ATP from ADP in the presence of a proton gradient across the membrane. The V-type beta chain is a regulatory subunit. The polypeptide is V-type ATP synthase beta chain (Streptococcus sanguinis (strain SK36)).